The following is a 432-amino-acid chain: Hexuronate transporter (432 aa).

An N-terminal signal peptide occupies residues 1–31; the sequence is MRKIKGLRWYMIALVTLGTVLGYLTRNTVAA. Residues 33–48 lie on the Periplasmic side of the membrane; that stretch reads APTLMEELNISTQQYS. A helical transmembrane segment spans residues 49–69; it reads YIIAAYSAAYTVMQPVAGYVL. Residues 70-75 lie on the Cytoplasmic side of the membrane; the sequence is DVLGTK. A helical transmembrane segment spans residues 76–96; it reads IGYAMFAVLWAVFCGATALAG. Over 97–99 the chain is Periplasmic; it reads SWG. A helical transmembrane segment spans residues 100–120; it reads GLAVARGAVGAAEAAMIPAGL. At 121-138 the chain is on the cytoplasmic side; the sequence is KASSEWFPAKERSIAVGY. A helical transmembrane segment spans residues 139–159; sequence FNVGSSIGAMIAPPLVVWAIV. The Periplasmic portion of the chain corresponds to 160-164; it reads MHSWQ. The chain crosses the membrane as a helical span at residues 165 to 185; the sequence is MAFIISGALSFIWAMAWLIFY. At 186-236 the chain is on the cytoplasmic side; it reads KHPRDQKHLTDEERDYIINGQEAQHQVSTAKKMSVGQILRNRQFWGIALPR. The helical transmembrane segment at 237-257 threads the bilayer; the sequence is FLAEPAWGTFNAWIPLFMFKV. Residues 258–264 are Periplasmic-facing; that stretch reads YGFNLKE. A helical membrane pass occupies residues 265–285; it reads IAMFAWMPMLFADLGCILGGY. Over 286-293 the chain is Cytoplasmic; sequence LPPLFQRW. The chain crosses the membrane as a helical span at residues 294-314; sequence FGVNLIVSRKMVVTLGAVLMI. The Periplasmic portion of the chain corresponds to 315 to 317; sequence GPG. A helical membrane pass occupies residues 318–338; that stretch reads MIGLFTNPYVAIMLLCIGGFA. The Cytoplasmic portion of the chain corresponds to 339–369; sequence HQALSGALITLSSDVFGRNEVATANGLTGMS. A helical membrane pass occupies residues 370 to 390; that stretch reads AWLASTLFALVVGALADTIGF. Residue serine 391 is a topological domain, periplasmic. A helical membrane pass occupies residues 392–412; it reads PLFAVLAVFDLLGALVIWTVL. Residues 413-432 lie on the Cytoplasmic side of the membrane; it reads QNKPAIEVAQETHNDPAPQH.

The protein belongs to the major facilitator superfamily. Phthalate permease family.

The protein localises to the cell inner membrane. It catalyses the reaction aldehydo-D-glucuronate(in) + H(+)(in) = aldehydo-D-glucuronate(out) + H(+)(out). It carries out the reaction aldehydo-D-galacturonate(out) + H(+)(out) = aldehydo-D-galacturonate(in) + H(+)(in). Its function is as follows. Transport of aldohexuronates such as D-glucuronate and D-galacturonate. This is Hexuronate transporter (exuT) from Escherichia coli O157:H7.